Here is a 329-residue protein sequence, read N- to C-terminus: Probable carboxylesterase 13 (329 aa).

Residue Met1 is modified to N-acetylmethionine. The short motif at 81 to 83 (HGG) is the Involved in the stabilization of the negatively charged intermediate by the formation of the oxyanion hole element. Residues Ser165, Asp269, and His302 contribute to the active site.

It belongs to the 'GDXG' lipolytic enzyme family. As to expression, expressed in flowers.

The catalysed reaction is a carboxylic ester + H2O = an alcohol + a carboxylate + H(+). In terms of biological role, carboxylesterase acting on esters with varying acyl chain length. This is Probable carboxylesterase 13 (CXE13) from Arabidopsis thaliana (Mouse-ear cress).